The following is a 294-amino-acid chain: Metallophosphoesterase MPPED2 (294 aa).

Mn(2+) contacts are provided by Asp65, His67, Asp86, Asn117, and His213. 117 to 118 (NH) contributes to the GMP binding site. GMP-binding positions include 225–226 (KE) and 252–255 (GIHE). Residue His254 coordinates Mn(2+).

The protein belongs to the UPF0046 family. As to quaternary structure, homodimer. Mn(2+) serves as cofactor. It depends on Co(2+) as a cofactor.

Its activity is regulated as follows. Inhibited by nmolar levels of AMP and GMP. Its function is as follows. Displays low metallophosphoesterase activity (in vitro). May play a role in the development of the nervous system. This chain is Metallophosphoesterase MPPED2 (Mpped2), found in Mus musculus (Mouse).